A 243-amino-acid polypeptide reads, in one-letter code: Small ribosomal subunit protein eS4 (243 aa).

Residues 43-105 (IPLLYIVRDY…TGEHYRVLPN (63 aa)) form the S4 RNA-binding domain.

The protein belongs to the eukaryotic ribosomal protein eS4 family.

The protein is Small ribosomal subunit protein eS4 (rps4e) of Pyrococcus abyssi (strain GE5 / Orsay).